Here is a 943-residue protein sequence, read N- to C-terminus: Serine/threonine-protein kinase ATG1 (943 aa).

A Protein kinase domain is found at 22–327; that stretch reads FVIDKEIGKG…FEDFFHHPVI (306 aa). ATP contacts are provided by residues 28 to 36 and Lys51; that span reads IGKGSFAQV. Asp165 serves as the catalytic Proton acceptor. 5 disordered regions span residues 334-468, 503-561, 774-800, 858-888, and 914-943; these read LVED…LTDE, QQGQ…SPGA, LPEE…GGQA, HLPK…SDDK, and AASK…SVPT. Residues 338–352 are compositionally biased toward basic and acidic residues; sequence DIPKPEKPVLAETKS. Residues 517-529 are compositionally biased toward polar residues; the sequence is ATQQGHPTSTTGA. The span at 542–554 shows a compositional bias: basic and acidic residues; the sequence is RNDHYRKASHDKT. The segment covering 919-928 has biased composition (low complexity); that stretch reads QQQQQQQQVV.

It belongs to the protein kinase superfamily. Ser/Thr protein kinase family. APG1/unc-51/ULK1 subfamily. Homodimer. Forms a ternary complex with ATG13 and ATG17.

The protein resides in the cytoplasm. It is found in the preautophagosomal structure membrane. It carries out the reaction L-seryl-[protein] + ATP = O-phospho-L-seryl-[protein] + ADP + H(+). The enzyme catalyses L-threonyl-[protein] + ATP = O-phospho-L-threonyl-[protein] + ADP + H(+). Serine/threonine protein kinase involved in the cytoplasm to vacuole transport (Cvt) and found to be essential in autophagy, where it is required for the formation of autophagosomes. Involved in the clearance of protein aggregates which cannot be efficiently cleared by the proteasome. Required for selective autophagic degradation of the nucleus (nucleophagy) as well as for mitophagy which contributes to regulate mitochondrial quantity and quality by eliminating the mitochondria to a basal level to fulfill cellular energy requirements and preventing excess ROS production. Also involved in endoplasmic reticulum-specific autophagic process, in selective removal of ER-associated degradation (ERAD) substrates. Plays a key role in ATG9 and ATG23 cycling through the pre-autophagosomal structure and is necessary to promote ATG18 binding to ATG9 through phosphorylation of ATG9. Catalyzes phosphorylation of ATG4, decreasing the interaction between ATG4 and ATG8 and impairing deconjugation of PE-conjugated forms of ATG8. The protein is Serine/threonine-protein kinase ATG1 of Chaetomium globosum (strain ATCC 6205 / CBS 148.51 / DSM 1962 / NBRC 6347 / NRRL 1970) (Soil fungus).